Reading from the N-terminus, the 284-residue chain is Formyltetrahydrofolate deformylase (284 aa).

The 84-residue stretch at 7-90 folds into the ACT domain; the sequence is TLLVSCPDQP…QIHFSDQLPR (84 aa). Asp228 is an active-site residue.

It belongs to the PurU family.

It carries out the reaction (6R)-10-formyltetrahydrofolate + H2O = (6S)-5,6,7,8-tetrahydrofolate + formate + H(+). It functions in the pathway purine metabolism; IMP biosynthesis via de novo pathway; formate from 10-formyl-5,6,7,8-tetrahydrofolate: step 1/1. In terms of biological role, catalyzes the hydrolysis of 10-formyltetrahydrofolate (formyl-FH4) to formate and tetrahydrofolate (FH4). The chain is Formyltetrahydrofolate deformylase from Synechocystis sp. (strain ATCC 27184 / PCC 6803 / Kazusa).